A 204-amino-acid polypeptide reads, in one-letter code: Methylthioribulose-1-phosphate dehydratase (204 aa).

Positions 96 and 98 each coordinate Zn(2+).

Belongs to the aldolase class II family. MtnB subfamily. The cofactor is Zn(2+).

The catalysed reaction is 5-(methylsulfanyl)-D-ribulose 1-phosphate = 5-methylsulfanyl-2,3-dioxopentyl phosphate + H2O. Its pathway is amino-acid biosynthesis; L-methionine biosynthesis via salvage pathway; L-methionine from S-methyl-5-thio-alpha-D-ribose 1-phosphate: step 2/6. Its function is as follows. Catalyzes the dehydration of methylthioribulose-1-phosphate (MTRu-1-P) into 2,3-diketo-5-methylthiopentyl-1-phosphate (DK-MTP-1-P). This Methylococcus capsulatus (strain ATCC 33009 / NCIMB 11132 / Bath) protein is Methylthioribulose-1-phosphate dehydratase.